The chain runs to 313 residues: MPIQLECLSHTPLHGYVDPAPEVVAEVERVQAAARDRVRAFDPELVVVFAPDHFNGFFYDVMPPFCIGAAATAIGDFKSLAGKLPVPADLALSLAESVMAADIDVALSHRMQVDHGCADALAALTGSLHRYPVIPVFINSVAPPMATLRRARLLGDAVGRFLSRAGKRVLVVGSGGISHEPPVPELAGASEEVAERLIAGRNPSPESAARQARTVAAAKSFVAGDSHLHPLNPEWDRAFLSLLASGELTAVDGMTNDAITRDGGKSAHEIRTWVAAFGALAAYGPYRASLDFYRAIPEWIAGFATMHAEPAAV.

His-115 serves as the catalytic Proton donor. His-179 acts as the Proton acceptor in catalysis.

It belongs to the LigB/MhpB extradiol dioxygenase family. As to quaternary structure, homotetramer. Requires Fe(2+) as cofactor.

The catalysed reaction is 3-(2,3-dihydroxyphenyl)propanoate + O2 = (2Z,4E)-2-hydroxy-6-oxonona-2,4-dienedioate + H(+). The enzyme catalyses (2E)-3-(2,3-dihydroxyphenyl)prop-2-enoate + O2 = (2Z,4E,7E)-2-hydroxy-6-oxonona-2,4,7-trienedioate + H(+). The protein operates within aromatic compound metabolism; 3-phenylpropanoate degradation. Its function is as follows. Catalyzes the non-heme iron(II)-dependent oxidative cleavage of 2,3-dihydroxyphenylpropionic acid and 2,3-dihydroxicinnamic acid into 2-hydroxy-6-ketononadienedioate and 2-hydroxy-6-ketononatrienedioate, respectively. Also catalyzes the cleavage of catechol. In Cupriavidus necator (Alcaligenes eutrophus), this protein is 2,3-dihydroxyphenylpropionate/2,3-dihydroxicinnamic acid 1,2-dioxygenase (mhpB).